A 546-amino-acid chain; its full sequence is MTTEKRQILVTAALPYANGPIHLGHMVEHIQADIWVRFQRLKGNDCLFICGEDAHGTAIMITAQKQGLPPEALVAKMHKEHARDLGGFLIEYDNFYTTHSPENRELAELIYTRLKDKGDIFAKTISQAYDPVKEIFLPDRFIRGTCPRCGAKDQYGDVCEVCGATYSPTELIDPVSALSGAKPIEKNSEHFFFSLNRYTQLLKKWIDAGHLQPQVANKLKEWFSEDLKPWDISRDAPYFGFEIPHAANKYFYVWLDAPIGYMASLKNLSKQRPSVNFDAYWKEGSQTELYHFVGKDIVYFHALFWPAMLSGAGFRLPTAIYVHGYLTVNGQKMSKSRGTFITAHHYLDHLSPEYLRYYYAAKLSAQVEDIDLNLDDFIQRVNADLIGKYVNLASRCAGFITKNFGGKLANELPEPDLYESFLQTEQTITDYYESLNYSKAVRVIMSLADRANQYIDAKKPWALAKEINQEAQVQAVCTQGLNLFKILTTYLKPILPVTAKKVEQFLNCDELNFANLKTPLLDHSVNPFEPLMQRLLPETAAQLTHE.

The short motif at P15–H25 is the 'HIGH' region element. The Zn(2+) site is built by C146, C149, C159, and C162. The 'KMSKS' region motif lies at K332–S336. K335 is a binding site for ATP.

The protein belongs to the class-I aminoacyl-tRNA synthetase family. MetG type 1 subfamily. In terms of assembly, monomer. Zn(2+) serves as cofactor.

The protein localises to the cytoplasm. It carries out the reaction tRNA(Met) + L-methionine + ATP = L-methionyl-tRNA(Met) + AMP + diphosphate. Its function is as follows. Is required not only for elongation of protein synthesis but also for the initiation of all mRNA translation through initiator tRNA(fMet) aminoacylation. The protein is Methionine--tRNA ligase of Coxiella burnetii (strain Dugway 5J108-111).